The chain runs to 186 residues: MAFRPSRLAIFIDGNNMFYAQQKNGWFFDPRRVLNYFANRPEIELVNAYWYTGLKDPQDQRGFRDALVSLGYTVRTKMLKEFHDESNGNRYFQRANLDIEIVIDMFNTVEQYDEIVLFSGDGDFERAIELLRAKQTHITVVSTDGMIARELRNATDRYIDLNDIRSFIEKTERPEPFVSAPVIAPA.

Its function is as follows. Functions in an output pathway of the circadian clock. One of three clock output pathways. Involved in negative feedback regulation of KaiC; deletion leads to overexpression of KaiC protein and decreases the amplitude of the circadian response. Overexpression reduces the expression of circadian genes. The protein is Low amplitude and bright protein LabA of Synechococcus elongatus (strain ATCC 33912 / PCC 7942 / FACHB-805) (Anacystis nidulans R2).